The chain runs to 424 residues: GTPase HflX (424 aa).

Residues 194–364 (YTVALTGYTG…AVVEMLPEKV (171 aa)) form the Hflx-type G domain. Residues 200 to 207 (GYTGAGKT), 225 to 229 (FATLS), 246 to 249 (DTIG), 314 to 317 (NKID), and 342 to 344 (SAA) contribute to the GTP site. Mg(2+) is bound by residues Thr207 and Thr227.

Belongs to the TRAFAC class OBG-HflX-like GTPase superfamily. HflX GTPase family. In terms of assembly, monomer. Associates with the 50S ribosomal subunit. Mg(2+) is required as a cofactor.

Its subcellular location is the cytoplasm. In terms of biological role, GTPase that associates with the 50S ribosomal subunit and may have a role during protein synthesis or ribosome biogenesis. This is GTPase HflX from Thermofilum pendens (strain DSM 2475 / Hrk 5).